A 179-amino-acid polypeptide reads, in one-letter code: Translationally-controlled tumor protein homolog (179 aa).

Residues methionine 1 to valine 179 form the TCTP domain.

Belongs to the TCTP family.

Its subcellular location is the cytoplasm. It is found in the cytoskeleton. Involved in protein synthesis. Involved in microtubule stabilization. This chain is Translationally-controlled tumor protein homolog, found in Aspergillus fumigatus (strain ATCC MYA-4609 / CBS 101355 / FGSC A1100 / Af293) (Neosartorya fumigata).